A 175-amino-acid chain; its full sequence is Ribosome maturation factor RimM (175 aa).

The 81-residue stretch at E95–F175 folds into the PRC barrel domain.

It belongs to the RimM family. In terms of assembly, binds ribosomal protein uS19.

It localises to the cytoplasm. An accessory protein needed during the final step in the assembly of 30S ribosomal subunit, possibly for assembly of the head region. Essential for efficient processing of 16S rRNA. May be needed both before and after RbfA during the maturation of 16S rRNA. It has affinity for free ribosomal 30S subunits but not for 70S ribosomes. The sequence is that of Ribosome maturation factor RimM from Glaesserella parasuis serovar 5 (strain SH0165) (Haemophilus parasuis).